A 988-amino-acid chain; its full sequence is Protein argonaute 10 (988 aa).

Basic and acidic residues predominate over residues 1 to 11 (MPIRQMKDSSE). The interval 1–103 (MPIRQMKDSS…PPSQTTSSAV (103 aa)) is disordered. Residues 41-57 (PVTVTTPATVTQSQASS) show a composition bias toward low complexity. The span at 64-73 (NRSRRRNRGG) shows a compositional bias: basic residues. The 114-residue stretch at 338 to 451 (PVIEFVAQLL…LPMEACKIVE (114 aa)) folds into the PAZ domain. The 322-residue stretch at 625–946 (LLLAILPDNN…AAFRARFYLE (322 aa)) folds into the Piwi domain.

It belongs to the argonaute family. Ago subfamily. As to quaternary structure, interacts with GATA18/HAN and KNAT1/BP. Interacts with RICE1 and RICE2 that act as cofactors. Expressed in roots, stems, leaves, developing embryo, siliques, inflorescences, provascular tissue, shoot apical meristem (SAM) and adaxial (upper) sides of lateral organ primordia. Observed in the floral meristem, the adaxial side of sepal primordia, and the provascular tissue.

The protein localises to the cytoplasm. Involved in RNA-mediated post-transcriptional gene silencing (PTGS). Main component of the RNA-induced silencing complex (RISC) that binds to a short guide RNA such as a microRNA (miRNA) or small interfering RNA (siRNA). RISC uses the mature miRNA or siRNA as a guide for slicer-directed cleavage of homologous mRNAs to repress gene expression. Required for reliable formation of primary and axillary shoot apical meristems. Specifies leaf adaxial identity by repressing the miR165 and miR166 microRNAs in the embryonic shoot apex, in the shoot apical meristem (SAM) and leaf. Represses the microRNA miR398 which targets CCS1 chaperone mRNAs for translational inhibition. Acts as a negative regulator of AGO1 protein level. Like AGO1, is required for stem cell function and organ polarity. Unlike AGO1, is not subjected to small RNA-mediated repression itself. Essential for multiple processes in development. Coregulates, with GATA18/HAN, the shoot apical meristem (SAM) organization. This chain is Protein argonaute 10, found in Arabidopsis thaliana (Mouse-ear cress).